The sequence spans 541 residues: DEAD-box ATP-dependent RNA helicase 57 (541 aa).

The span at 43-52 (VEEEEDTEQP) shows a compositional bias: acidic residues. Positions 43 to 72 (VEEEEDTEQPEAEKVIVSSKKRKRRSSNSV) are disordered. The Q motif signature appears at 141–169 (ELSSRYGCEGYILRNLAELGFKEPTPIQR). In terms of domain architecture, Helicase ATP-binding spans 172–342 (IPILLSGREC…RSIMHDAVRV (171 aa)). 185-192 (APTGSGKT) contacts ATP. Residues 289–292 (DESD) carry the DEAD box motif. One can recognise a Helicase C-terminal domain in the interval 370–514 (ALRQSFAESL…EVPSWIMSLK (145 aa)). The interval 517 to 541 (KWRKHRPRRDSISTKPKADKNDTDE) is disordered. The span at 525 to 541 (RDSISTKPKADKNDTDE) shows a compositional bias: basic and acidic residues.

Belongs to the DEAD box helicase family. DDX52/ROK1 subfamily.

It catalyses the reaction ATP + H2O = ADP + phosphate + H(+). The protein is DEAD-box ATP-dependent RNA helicase 57 (RH57) of Arabidopsis thaliana (Mouse-ear cress).